A 780-amino-acid polypeptide reads, in one-letter code: Potassium/sodium hyperpolarization-activated cyclic nucleotide-gated channel 3 (780 aa).

Residues 1 to 47 (MEEEARPAVGDGEAATPARETPPAAPAQARAASGGVPESAPEPKRRQ) form a disordered region. The Cytoplasmic portion of the chain corresponds to 1-96 (MEEEARPAVG…PYSDFRFYWD (96 aa)). Low complexity predominate over residues 13–32 (EAATPARETPPAAPAQARAA). The tract at residues 45–90 (RRQLGTLLQPTVNKFSLRVFGSHKAVEIEQERVKSAGAWIIHPYSD) is involved in subunit assembly. The chain crosses the membrane as a helical span at residues 97–117 (LIMLLLMVGNLIVLPVGITFF). Over 118-123 (KEENSP) the chain is Extracellular. Residues 124–144 (PWIVFNVLSDTFFLLDLVLNF) traverse the membrane as a helical segment. The Cytoplasmic portion of the chain corresponds to 145–170 (RTGIVVEEGAEILLAPRAIRTRYLRT). Residues 171 to 191 (WFLVDLISSIPVDYIFLVVEL) form a helical membrane-spanning segment. Over 192–200 (EPRLDAEVY) the chain is Extracellular. A helical; Voltage-sensor transmembrane segment spans residues 201–221 (KTARALRIVRFTKILSLLRLL). The Cytoplasmic segment spans residues 222–252 (RLSRLIRYMHQWEEIFHMTYDLASAVVRIFN). Residues 253-273 (LIGMMLLLCHWDGCLQFLVPM) traverse the membrane as a helical segment. The Extracellular portion of the chain corresponds to 274-296 (LQDFPSDCWVSMNRMVNHSWGRQ). N-linked (GlcNAc...) asparagine glycosylation is present at asparagine 290. Residues 297 to 318 (YSHALFKAMSHMLCIGYGQQAP) constitute an intramembrane region (pore-forming). Residues 319-328 (VGMPDVWLTM) lie on the Extracellular side of the membrane. A helical transmembrane segment spans residues 329-349 (LSMIVGATCYAMFIGHATALI). The Cytoplasmic segment spans residues 350–780 (QSLDSSRRQY…PRGPQISANM (431 aa)). Residues 353–780 (DSSRRQYQEK…PRGPQISANM (428 aa)) form an interaction with KCTD3 region. 3',5'-cyclic AMP is bound by residues glycine 491, glutamate 492, cysteine 494, arginine 501, threonine 502, arginine 542, and arginine 545. Residues 549–569 (KNSILQRKRSEPSPGSSSGGV) are disordered. The residue at position 634 (serine 634) is a Phosphoserine. Residues 687–698 (ASLSRTGRSQVS) show a composition bias toward polar residues. Positions 687–780 (ASLSRTGRSQ…PRGPQISANM (94 aa)) are disordered.

This sequence belongs to the potassium channel HCN family. In terms of assembly, homotetramer. The potassium channel is composed of a homo- or heterotetrameric complex of pore-forming subunits. Interacts with HCN1. Interacts with KCTD3; this interaction increases cell surface expression and current density of this channel. Interacts with PEX5L.

Its subcellular location is the cell membrane. The enzyme catalyses K(+)(in) = K(+)(out). The catalysed reaction is Na(+)(in) = Na(+)(out). With respect to regulation, inhibited by Cs(1+) and ivabradine. Unlike HCN2 and HCN4, HCN3 is insensitive to cyclic nucleotides, such as cAMP or cGMP. This lack of sensitivity of HCN3, despite harboring a functional cyclic nucleotide-binding domain (CNBD), may be explained by its shorter C-terminal sequence, which may alter the normal autoinhibition of the channel. Phosphatidylinositol-4,5-bisphosphate (PIP(2)) shifts HCN3 activation to more depolarized potentials and accelerated activation kinetics. Its function is as follows. Hyperpolarization-activated ion channel that are permeable to sodium and potassium ions, with an about 3:1 preference for potassium ions. Contributes to the native pacemaker currents in heart (If) and in neurons (Ih). In particular, plays a pivotal role in maintaining excitability and promoting rhythmic burst firing within hypothalamic nuclei. Exerts a significant influence on the configuration of the cardiac action potential waveform. Does not appear to play a prominent role in the processing of acute, neuropathic, or inflammatory pain. In Rattus norvegicus (Rat), this protein is Potassium/sodium hyperpolarization-activated cyclic nucleotide-gated channel 3 (Hcn3).